The sequence spans 202 residues: Small ribosomal subunit protein uS4 (202 aa).

Residues 15–42 (LGDLPGLTRKAAKRSYPPGQHGQARRKR) form a disordered region. The S4 RNA-binding domain maps to 90–152 (NRLDNVCFRL…KCSKQLAEGN (63 aa)).

Belongs to the universal ribosomal protein uS4 family. In terms of assembly, part of the 30S ribosomal subunit. Contacts protein S5. The interaction surface between S4 and S5 is involved in control of translational fidelity.

Functionally, one of the primary rRNA binding proteins, it binds directly to 16S rRNA where it nucleates assembly of the body of the 30S subunit. Its function is as follows. With S5 and S12 plays an important role in translational accuracy. The chain is Small ribosomal subunit protein uS4 from Synechococcus sp. (strain WH7803).